The sequence spans 85 residues: Antitoxin VapB4 (85 aa).

Belongs to the phD/YefM antitoxin family. Interacts with cognate toxin VapC4.

Its function is as follows. Antitoxin component of a type II toxin-antitoxin (TA) system. Antitoxin that counteracts the effect of the VapC4 toxin. In Mycobacterium tuberculosis (strain CDC 1551 / Oshkosh), this protein is Antitoxin VapB4 (vapB4).